Here is a 501-residue protein sequence, read N- to C-terminus: L-arabinose isomerase (501 aa).

4 residues coordinate Mn(2+): glutamate 306, glutamate 333, histidine 350, and histidine 450.

This sequence belongs to the arabinose isomerase family. In terms of assembly, homohexamer. Requires Mn(2+) as cofactor.

The catalysed reaction is beta-L-arabinopyranose = L-ribulose. It functions in the pathway carbohydrate degradation; L-arabinose degradation via L-ribulose; D-xylulose 5-phosphate from L-arabinose (bacterial route): step 1/3. Catalyzes the conversion of L-arabinose to L-ribulose. The protein is L-arabinose isomerase of Pectobacterium carotovorum subsp. carotovorum (strain PC1).